The following is a 257-amino-acid chain: Protein TONNEAU 1b (257 aa).

The region spanning 73–105 (SGRLLSALICEYLDWAQLNHTLKVYQPECNSAK) is the LisH domain. 2 disordered regions span residues 148–216 (QVMG…EDMP) and 231–257 (LDRKTRNLTSSWRNVKDGTSEEEEGKD). The span at 187–199 (SVSASQASGAATS) shows a compositional bias: low complexity. Composition is skewed to basic and acidic residues over residues 201 to 212 (YRKDESNWRYDT) and 244 to 257 (NVKDGTSEEEEGKD).

In terms of assembly, interacts with CEN1, LNG1/TRM2 and LNG2/TRM1 (via C-terminus).

It is found in the cytoplasm. The protein localises to the cytoskeleton. Involved in the control of the dynamic organization of the cortical cytoskeleton. May play a role in the organization of microtubule arrays at the centrosome through interaction with centrin 1 (CEN1). The sequence is that of Protein TONNEAU 1b (TON1B) from Arabidopsis thaliana (Mouse-ear cress).